The primary structure comprises 473 residues: MKKNIGKITQIISAVVDVKFTNKGKLPQILNALECYNDKQRIVLEIAQHIGDDTVRCIAMNSTEGLVRGMEVVDTGSPISIPVGIETLGRIMNVVGEPIDGKGKIKGSSISSIYKSAPSFTQQSTDRNILVTGIKVVDLLAPYTKGGKIGLFGGAGVGKTVLIMELINNVAKAHGGYTVFAGVGERTREGNDLYHEMIDSGVINLEEPEKSKVALVYGQMNEPPGARARVALTGLTVAESFRDMNEGQDVLFFVDNIFRFTQAGSEVSALLGRIPSAVGYQPTLATDMGELQERITSTKHGSITSVQAIYVPADDLTDPAPATSFAHLDATIVLSRQIAELGIYPAVDPLDSTSQVLDPMIVGEEHYNVARKVQQILQTYKSLQDIIAILGMDELSEEDKLTVSRARKIQRFLSQPFHVAEVFTGAEGKFVNLADTIAGFKGLTEGKYDDLPEAAFYMVGTIEEALEKAKTLK.

153–160 (GGAGVGKT) is a binding site for ATP.

It belongs to the ATPase alpha/beta chains family. As to quaternary structure, F-type ATPases have 2 components, CF(1) - the catalytic core - and CF(0) - the membrane proton channel. CF(1) has five subunits: alpha(3), beta(3), gamma(1), delta(1), epsilon(1). CF(0) has three main subunits: a(1), b(2) and c(9-12). The alpha and beta chains form an alternating ring which encloses part of the gamma chain. CF(1) is attached to CF(0) by a central stalk formed by the gamma and epsilon chains, while a peripheral stalk is formed by the delta and b chains.

Its subcellular location is the cell inner membrane. It catalyses the reaction ATP + H2O + 4 H(+)(in) = ADP + phosphate + 5 H(+)(out). In terms of biological role, produces ATP from ADP in the presence of a proton gradient across the membrane. The catalytic sites are hosted primarily by the beta subunits. The sequence is that of ATP synthase subunit beta from Rickettsia bellii (strain OSU 85-389).